The following is a 690-amino-acid chain: Guanylate cyclase soluble subunit alpha-1 (690 aa).

S266 is modified (phosphoserine). In terms of domain architecture, Guanylate cyclase spans 480-607 (TMLFSDIVGF…NNVTLANKFE (128 aa)).

This sequence belongs to the adenylyl cyclase class-4/guanylyl cyclase family. In terms of assembly, the active enzyme is formed by a heterodimer of an alpha and a beta subunit. Heterodimer with GUCY1B1. Mg(2+) serves as cofactor. It depends on Mn(2+) as a cofactor.

Its subcellular location is the cytoplasm. The enzyme catalyses GTP = 3',5'-cyclic GMP + diphosphate. With respect to regulation, activated by nitric oxide in the presence of magnesium or manganese ions. The sequence is that of Guanylate cyclase soluble subunit alpha-1 (Gucy1a1) from Rattus norvegicus (Rat).